Consider the following 212-residue polypeptide: Uridine kinase (212 aa).

Position 13–20 (13–20) interacts with ATP; it reads GASASGKS.

This sequence belongs to the uridine kinase family.

Its subcellular location is the cytoplasm. The catalysed reaction is uridine + ATP = UMP + ADP + H(+). It carries out the reaction cytidine + ATP = CMP + ADP + H(+). It functions in the pathway pyrimidine metabolism; CTP biosynthesis via salvage pathway; CTP from cytidine: step 1/3. The protein operates within pyrimidine metabolism; UMP biosynthesis via salvage pathway; UMP from uridine: step 1/1. This chain is Uridine kinase, found in Shewanella baltica (strain OS155 / ATCC BAA-1091).